A 169-amino-acid chain; its full sequence is Probable NADH dehydrogenase [ubiquinone] 1 alpha subcomplex subunit 5, mitochondrial (169 aa).

The transit peptide at methionine 1–leucine 11 directs the protein to the mitochondrion.

Belongs to the complex I NDUFA5 subunit family. Complex I is composed of at least 49 different subunits.

It localises to the mitochondrion inner membrane. Functionally, accessory subunit of the mitochondrial membrane respiratory chain NADH dehydrogenase (Complex I), that is believed not to be involved in catalysis. Complex I functions in the transfer of electrons from NADH to the respiratory chain. The immediate electron acceptor for the enzyme is believed to be ubiquinone. The polypeptide is Probable NADH dehydrogenase [ubiquinone] 1 alpha subcomplex subunit 5, mitochondrial (Arabidopsis thaliana (Mouse-ear cress)).